The sequence spans 285 residues: Ret finger protein-like 4A (285 aa).

An RING-type; degenerate zinc finger spans residues 11–53; that stretch reads CYFCFRYLENPVYLNCGYICCFQCLDSLEKSPEGDGVLCPNCS. The B30.2/SPRY domain maps to 78–276; the sequence is EPQLNFILTM…ISICPVMNPS (199 aa).

Interacts with PSMB1, UBE2A and CCNB1.

The protein resides in the cytoplasm. It is found in the nucleus. The polypeptide is Ret finger protein-like 4A (Rfpl4a) (Rattus norvegicus (Rat)).